Reading from the N-terminus, the 134-residue chain is UPF0412 protein YaaI (134 aa).

The first 23 residues, M1 to A23, serve as a signal peptide directing secretion.

Belongs to the UPF0412 family.

The sequence is that of UPF0412 protein YaaI from Escherichia coli O17:K52:H18 (strain UMN026 / ExPEC).